We begin with the raw amino-acid sequence, 424 residues long: Glutamyl-tRNA(Gln) amidotransferase subunit D (424 aa).

The disordered stretch occupies residues 58–79 (NTNGGLNGGKEHKTAGEEVQKS). Over residues 66-78 (GKEHKTAGEEVQK) the composition is skewed to basic and acidic residues. The region spanning 84 to 406 (PKVAILSTGG…LGQTDEFNEA (323 aa)) is the Asparaginase/glutaminase domain. Active-site residues include threonine 94, threonine 170, aspartate 171, and lysine 247.

It belongs to the asparaginase 1 family. GatD subfamily. Heterodimer of GatD and GatE.

The catalysed reaction is L-glutamyl-tRNA(Gln) + L-glutamine + ATP + H2O = L-glutaminyl-tRNA(Gln) + L-glutamate + ADP + phosphate + H(+). Its function is as follows. Allows the formation of correctly charged Gln-tRNA(Gln) through the transamidation of misacylated Glu-tRNA(Gln) in organisms which lack glutaminyl-tRNA synthetase. The reaction takes place in the presence of glutamine and ATP through an activated gamma-phospho-Glu-tRNA(Gln). The GatDE system is specific for glutamate and does not act on aspartate. This Methanosarcina barkeri (strain Fusaro / DSM 804) protein is Glutamyl-tRNA(Gln) amidotransferase subunit D.